Here is a 187-residue protein sequence, read N- to C-terminus: Threonylcarbamoyl-AMP synthase (187 aa).

Residues 4 to 187 (QSTIAAAITC…DAMNGKVFRG (184 aa)) enclose the YrdC-like domain.

The protein belongs to the SUA5 family. TsaC subfamily.

It localises to the cytoplasm. The enzyme catalyses L-threonine + hydrogencarbonate + ATP = L-threonylcarbamoyladenylate + diphosphate + H2O. Required for the formation of a threonylcarbamoyl group on adenosine at position 37 (t(6)A37) in tRNAs that read codons beginning with adenine. Catalyzes the conversion of L-threonine, HCO(3)(-)/CO(2) and ATP to give threonylcarbamoyl-AMP (TC-AMP) as the acyladenylate intermediate, with the release of diphosphate. The polypeptide is Threonylcarbamoyl-AMP synthase (Pseudoalteromonas translucida (strain TAC 125)).